The following is a 62-amino-acid chain: Large ribosomal subunit protein bL28 (62 aa).

The protein belongs to the bacterial ribosomal protein bL28 family.

This is Large ribosomal subunit protein bL28 from Ruminiclostridium cellulolyticum (strain ATCC 35319 / DSM 5812 / JCM 6584 / H10) (Clostridium cellulolyticum).